Consider the following 1065-residue polypeptide: DNA-directed RNA polymerase subunit beta (1065 aa).

This sequence belongs to the RNA polymerase beta chain family. As to quaternary structure, in plastids the minimal PEP RNA polymerase catalytic core is composed of four subunits: alpha, beta, beta', and beta''. When a (nuclear-encoded) sigma factor is associated with the core the holoenzyme is formed, which can initiate transcription.

Its subcellular location is the plastid. The protein localises to the chloroplast. It catalyses the reaction RNA(n) + a ribonucleoside 5'-triphosphate = RNA(n+1) + diphosphate. DNA-dependent RNA polymerase catalyzes the transcription of DNA into RNA using the four ribonucleoside triphosphates as substrates. The chain is DNA-directed RNA polymerase subunit beta from Marchantia polymorpha (Common liverwort).